A 307-amino-acid polypeptide reads, in one-letter code: Olfactory receptor 13G1 (307 aa).

Residues Met1–Gly22 lie on the Extracellular side of the membrane. An N-linked (GlcNAc...) asparagine glycan is attached at Asn2. Residues Ile23 to Ile43 traverse the membrane as a helical segment. Over Ile44–Thr51 the chain is Cytoplasmic. The helical transmembrane segment at Leu52–Thr72 threads the bilayer. Topologically, residues Ser73–Ser96 are extracellular. Residues Cys94 and Cys186 are joined by a disulfide bond. Residues Gln97–Tyr117 form a helical membrane-spanning segment. The Cytoplasmic segment spans residues Asp118–His136. A helical transmembrane segment spans residues Met137–Thr157. The Extracellular segment spans residues Ala158–Val194. Residues Met195–Ser214 traverse the membrane as a helical segment. Over Tyr215–Ala234 the chain is Cytoplasmic. A helical membrane pass occupies residues Phe235–Thr255. The Extracellular segment spans residues Tyr256–Asp268. Residues Lys269–Phe289 traverse the membrane as a helical segment. The Cytoplasmic portion of the chain corresponds to Gln290–His307.

This sequence belongs to the G-protein coupled receptor 1 family.

The protein localises to the cell membrane. Odorant receptor. This chain is Olfactory receptor 13G1 (OR13G1), found in Homo sapiens (Human).